We begin with the raw amino-acid sequence, 729 residues long: Fatty acid oxidation complex subunit alpha (729 aa).

The enoyl-CoA hydratase/isomerase stretch occupies residues 1–189; it reads MLYQSETLQL…KIGLVDAVVD (189 aa). D296 contacts substrate. Residues 311–729 are 3-hydroxyacyl-CoA dehydrogenase; it reads AAPKLAAVLG…LLDVSTNQPA (419 aa). NAD(+) contacts are provided by residues M324, D343, 400–402, K407, and S429; that span reads VVE. H450 functions as the For 3-hydroxyacyl-CoA dehydrogenase activity in the catalytic mechanism. N453 is a binding site for NAD(+). Residues N500 and Y660 each coordinate substrate.

In the N-terminal section; belongs to the enoyl-CoA hydratase/isomerase family. This sequence in the C-terminal section; belongs to the 3-hydroxyacyl-CoA dehydrogenase family. Heterotetramer of two alpha chains (FadB) and two beta chains (FadA).

The enzyme catalyses a (3S)-3-hydroxyacyl-CoA + NAD(+) = a 3-oxoacyl-CoA + NADH + H(+). The catalysed reaction is a (3S)-3-hydroxyacyl-CoA = a (2E)-enoyl-CoA + H2O. It carries out the reaction a 4-saturated-(3S)-3-hydroxyacyl-CoA = a (3E)-enoyl-CoA + H2O. It catalyses the reaction (3S)-3-hydroxybutanoyl-CoA = (3R)-3-hydroxybutanoyl-CoA. The enzyme catalyses a (3Z)-enoyl-CoA = a 4-saturated (2E)-enoyl-CoA. The catalysed reaction is a (3E)-enoyl-CoA = a 4-saturated (2E)-enoyl-CoA. Its pathway is lipid metabolism; fatty acid beta-oxidation. Its function is as follows. Involved in the aerobic and anaerobic degradation of long-chain fatty acids via beta-oxidation cycle. Catalyzes the formation of 3-oxoacyl-CoA from enoyl-CoA via L-3-hydroxyacyl-CoA. It can also use D-3-hydroxyacyl-CoA and cis-3-enoyl-CoA as substrate. The chain is Fatty acid oxidation complex subunit alpha from Yersinia pseudotuberculosis serotype O:1b (strain IP 31758).